The sequence spans 533 residues: Calcium/calmodulin-dependent protein kinase type II subunit delta (533 aa).

Position 2 is an N-acetylalanine (alanine 2). One can recognise a Protein kinase domain in the interval 14 to 272; it reads YQLFEELGKG…ASEALKHPWI (259 aa). ATP is bound by residues 20–28 and lysine 43; that span reads LGKGAFSVV. Aspartate 136 (proton acceptor) is an active-site residue. Residues 283–292 are autoinhibitory domain; the sequence is HRQETVDCLK. At threonine 287 the chain carries Phosphothreonine; by autocatalysis. Residues 291 to 301 are calmodulin-binding; sequence LKKFNARRKLK. Threonine 306 and threonine 307 each carry phosphothreonine; by autocatalysis. Serine 315 bears the Phosphoserine mark. At lysine 318 the chain carries N6-acetyllysine. Serine 319 and serine 364 each carry phosphoserine. The tract at residues 337-375 is disordered; the sequence is TSPKENIPTPALEPQTTVIHNPDGNKESTESSNTTIEDE. Threonine 365 is modified (phosphothreonine). Phosphoserine is present on serine 367. A phosphothreonine mark is found at threonine 370 and threonine 371. Phosphoserine is present on residues serine 438, serine 524, and serine 528.

It belongs to the protein kinase superfamily. CAMK Ser/Thr protein kinase family. CaMK subfamily. CAMK2 is composed of 4 different chains: alpha (CAMK2A), beta (CAMK2B), gamma (CAMK2G), and delta (CAMK2D). The different isoforms assemble into homo- or heteromultimeric holoenzymes composed of 12 subunits with two hexameric rings stacked one on top of the other. Interacts with RRAD and CACNB2. Post-translationally, autophosphorylation of Thr-287 following activation by Ca(2+)/calmodulin. Phosphorylation of Thr-287 locks the kinase into an activated state. As to expression, expressed in liver.

The protein resides in the cell membrane. It is found in the sarcolemma. The protein localises to the sarcoplasmic reticulum membrane. It catalyses the reaction L-seryl-[protein] + ATP = O-phospho-L-seryl-[protein] + ADP + H(+). The enzyme catalyses L-threonyl-[protein] + ATP = O-phospho-L-threonyl-[protein] + ADP + H(+). With respect to regulation, activated by Ca(2+)/calmodulin. Binding of calmodulin results in conformational change that relieves intrasteric autoinhibition and allows autophosphorylation of Thr-287 which turns the kinase in a constitutively active form and confers to the kinase a Ca(2+)-independent activity. Its function is as follows. Calcium/calmodulin-dependent protein kinase involved in the regulation of Ca(2+) homeostatis and excitation-contraction coupling (ECC) in heart by targeting ion channels, transporters and accessory proteins involved in Ca(2+) influx into the myocyte, Ca(2+) release from the sarcoplasmic reticulum (SR), SR Ca(2+) uptake and Na(+) and K(+) channel transport. Targets also transcription factors and signaling molecules to regulate heart function. In its activated form, is involved in the pathogenesis of dilated cardiomyopathy and heart failure. Contributes to cardiac decompensation and heart failure by regulating SR Ca(2+) release via direct phosphorylation of RYR2 Ca(2+) channel on 'Ser-2808'. In the nucleus, phosphorylates the MEF2 repressor HDAC4, promoting its nuclear export and binding to 14-3-3 protein, and expression of MEF2 and genes involved in the hypertrophic program. Is essential for left ventricular remodeling responses to myocardial infarction. In pathological myocardial remodeling acts downstream of the beta adrenergic receptor signaling cascade to regulate key proteins involved in ECC. Regulates Ca(2+) influx to myocytes by binding and phosphorylating the L-type Ca(2+) channel subunit beta-2 CACNB2. In addition to Ca(2+) channels, can target and regulate the cardiac sarcolemmal Na(+) channel Nav1.5/SCN5A and the K+ channel Kv4.3/KCND3, which contribute to arrhythmogenesis in heart failure. Phosphorylates phospholamban (PLN/PLB), an endogenous inhibitor of SERCA2A/ATP2A2, contributing to the enhancement of SR Ca(2+) uptake that may be important in frequency-dependent acceleration of relaxation (FDAR) and maintenance of contractile function during acidosis. May participate in the modulation of skeletal muscle function in response to exercise, by regulating SR Ca(2+) transport through phosphorylation of PLN/PLB and triadin, a ryanodine receptor-coupling factor. In response to interferon-gamma (IFN-gamma) stimulation, catalyzes phosphorylation of STAT1, stimulating the JAK-STAT signaling pathway. The polypeptide is Calcium/calmodulin-dependent protein kinase type II subunit delta (CAMK2D) (Oryctolagus cuniculus (Rabbit)).